Reading from the N-terminus, the 425-residue chain is Riboflavin biosynthesis protein RibBA (425 aa).

Residues 1–204 (MTRLDSVERA…IADLIEWRRK (204 aa)) are DHBP synthase. D-ribulose 5-phosphate is bound by residues 28 to 29 (RE), Asp33, 141 to 145 (RPGHT), and Glu165. Glu29 is a Mg(2+) binding site. His144 lines the Mg(2+) pocket. Positions 205–425 (HEKHIERVAE…HLPGEFGGAL (221 aa)) are GTP cyclohydrolase II. 259–263 (RVHSE) contributes to the GTP binding site. The Zn(2+) site is built by Cys264, Cys275, and Cys277. Residues Gln280, 303–305 (EGR), and Thr325 contribute to the GTP site. Catalysis depends on Asp337, which acts as the Proton acceptor; for GTP cyclohydrolase activity. Arg339 functions as the Nucleophile; for GTP cyclohydrolase activity in the catalytic mechanism. Positions 360 and 365 each coordinate GTP.

This sequence in the N-terminal section; belongs to the DHBP synthase family. It in the C-terminal section; belongs to the GTP cyclohydrolase II family. Requires Mg(2+) as cofactor. Mn(2+) serves as cofactor. The cofactor is Zn(2+).

It catalyses the reaction D-ribulose 5-phosphate = (2S)-2-hydroxy-3-oxobutyl phosphate + formate + H(+). It carries out the reaction GTP + 4 H2O = 2,5-diamino-6-hydroxy-4-(5-phosphoribosylamino)-pyrimidine + formate + 2 phosphate + 3 H(+). It functions in the pathway cofactor biosynthesis; riboflavin biosynthesis; 2-hydroxy-3-oxobutyl phosphate from D-ribulose 5-phosphate: step 1/1. Its pathway is cofactor biosynthesis; riboflavin biosynthesis; 5-amino-6-(D-ribitylamino)uracil from GTP: step 1/4. In terms of biological role, catalyzes the conversion of D-ribulose 5-phosphate to formate and 3,4-dihydroxy-2-butanone 4-phosphate. Functionally, catalyzes the conversion of GTP to 2,5-diamino-6-ribosylamino-4(3H)-pyrimidinone 5'-phosphate (DARP), formate and pyrophosphate. The sequence is that of Riboflavin biosynthesis protein RibBA from Mycobacterium bovis (strain ATCC BAA-935 / AF2122/97).